The sequence spans 345 residues: Protein D345L (345 aa).

It belongs to the asfivirus D345L family. In terms of assembly, interacts with IKKA/CHUK and IKBKB.

The protein localises to the host cytoplasm. Plays a role in the negative regulation of host NF-kappa-B signaling pathway. Mechanistically, recruits IKKA/CHUK and IKBKB to suppress their kinase activity towards NFKBIA. This is Protein D345L from Ornithodoros (relapsing fever ticks).